Here is a 321-residue protein sequence, read N- to C-terminus: High osmolarity signaling protein SHO1A (321 aa).

The Cytoplasmic segment spans residues 1–28 (MDYNNNRYGGGGGGSKFNLGHIVGDPFS). A helical transmembrane segment spans residues 29 to 49 (LATIAIATAGWLIAFVSSIIA). Over 50–58 (NIDQEYPNY) the chain is Extracellular. A glycan (N-linked (GlcNAc...) asparagine) is linked at Asn-57. A helical membrane pass occupies residues 59–79 (SWWALAYMFFVILGVTFAVAA). A topological domain (cytoplasmic) is located at residue Asn-80. A helical membrane pass occupies residues 81-101 (AVYTYHVAMVGFLAAGLVFTT). The Extracellular portion of the chain corresponds to 102 to 116 (SSVNSLIYWSDKAKQ). The chain crosses the membrane as a helical span at residues 117-137 (AAAAGFILLSMVSIVWIFYFG). Over 138–321 (SQPTASHRQT…IAPSNYLILL (184 aa)) the chain is Cytoplasmic. Disordered regions lie at residues 155–181 (KDHA…AQHP) and 194–261 (TSSP…QQPT). Composition is skewed to polar residues over residues 165–181 (HMTQ…AQHP) and 225–237 (NFSN…PITS). Residues 238 to 249 (QNNPQNQHQQPQ) show a composition bias toward low complexity. Over residues 250-261 (DLTSPSTTQQPT) the composition is skewed to polar residues. The region spanning 262-321 (EYPYRAKAIYSYEANPDDANEISFNKHEILEVSDVSGRWWQAKKENGETGIAPSNYLILL) is the SH3 domain.

This sequence belongs to the SHO1 family. Forms homooligomers.

The protein localises to the cell membrane. Plasma membrane osmosensor that activates the high osmolarity glycerol (HOG) MAPK signaling pathway in response to high osmolarity. This Hortaea werneckii protein is High osmolarity signaling protein SHO1A (SHO1A).